A 213-amino-acid polypeptide reads, in one-letter code: Large ribosomal subunit protein uL18c (213 aa).

It belongs to the universal ribosomal protein uL18 family.

It is found in the plastid. It localises to the apicoplast. The polypeptide is Large ribosomal subunit protein uL18c (RPL18) (Plasmodium falciparum (isolate 3D7)).